We begin with the raw amino-acid sequence, 71 residues long: MANLKAVFLICIVAFIALQCVVAEPAAEDSVVVKRSIGSALKKALPVAKKIGKIALPIAKAALPVAAGLVG.

Residues 1-23 form the signal peptide; that stretch reads MANLKAVFLICIVAFIALQCVVA. 2 propeptides span residues 24–35 and 65–71; these read EPAAEDSVVVKR and VAAGLVG.

As to quaternary structure, homomer of four to six subunits.

It is found in the secreted. In terms of biological role, female-specific peptides with potent activity against Gram-positive and Gram-negative bacteria. They have as well hemolytic activity. The polypeptide is Ceratotoxin-A (CTXA1) (Ceratitis capitata (Mediterranean fruit fly)).